Here is a 294-residue protein sequence, read N- to C-terminus: MTENNIDRISNIIRTQDILRRHDFNFKKKFGQNFLTDHNILTKITQTAELSKEVNVIEIGPGIGSLTQYLLEEAAEVMAFEIDKSLIPILEETMAPYDNFTLVSADILKVDLLSEIQKFKNPNLPIKVVANLPYYITTPILMHLIESKIPFSEFVVMMQKEVADRIAASPKTKAYGSLSIAVQYYMEASVAFIVPRTVFIPAPNVDSAILKMVRREAPLVEVEDEEWFFKTMHSSFVHRRKTLMNNLQAAFGKESKPEIEKLLAQAEISPTIRGEALSIEEFAKLADALLPLKK.

Residues Asn33, Leu35, Gly60, Glu81, Asp106, and Asn131 each coordinate S-adenosyl-L-methionine.

It belongs to the class I-like SAM-binding methyltransferase superfamily. rRNA adenine N(6)-methyltransferase family. RsmA subfamily.

It is found in the cytoplasm. It catalyses the reaction adenosine(1518)/adenosine(1519) in 16S rRNA + 4 S-adenosyl-L-methionine = N(6)-dimethyladenosine(1518)/N(6)-dimethyladenosine(1519) in 16S rRNA + 4 S-adenosyl-L-homocysteine + 4 H(+). In terms of biological role, specifically dimethylates two adjacent adenosines (A1518 and A1519) in the loop of a conserved hairpin near the 3'-end of 16S rRNA in the 30S particle. May play a critical role in biogenesis of 30S subunits. The sequence is that of Ribosomal RNA small subunit methyltransferase A from Lactococcus lactis subsp. lactis (strain IL1403) (Streptococcus lactis).